We begin with the raw amino-acid sequence, 385 residues long: GDP-D-glucose phosphorylase 1 (385 aa).

Catalysis depends on His-218, which acts as the Tele-GMP-histidine intermediate.

It belongs to the GDPGP1 family.

Its subcellular location is the cytoplasm. It carries out the reaction GDP-alpha-D-glucose + phosphate = alpha-D-glucose 1-phosphate + GDP + H(+). Functionally, specific and highly efficient GDP-D-glucose phosphorylase regulating the levels of GDP-D-glucose in cells. In Macaca fascicularis (Crab-eating macaque), this protein is GDP-D-glucose phosphorylase 1 (GDPGP1).